A 255-amino-acid chain; its full sequence is 4-hydroxy-tetrahydrodipicolinate reductase (255 aa).

NAD(+) is bound by residues 9–14 (GFKGKM), Asp-35, 89–91 (GTT), and 115–118 (APNF). Residue His-145 is the Proton donor/acceptor of the active site. His-146 lines the (S)-2,3,4,5-tetrahydrodipicolinate pocket. Residue Lys-149 is the Proton donor of the active site. 155–156 (GT) contributes to the (S)-2,3,4,5-tetrahydrodipicolinate binding site.

This sequence belongs to the DapB family.

It localises to the cytoplasm. The enzyme catalyses (S)-2,3,4,5-tetrahydrodipicolinate + NAD(+) + H2O = (2S,4S)-4-hydroxy-2,3,4,5-tetrahydrodipicolinate + NADH + H(+). It carries out the reaction (S)-2,3,4,5-tetrahydrodipicolinate + NADP(+) + H2O = (2S,4S)-4-hydroxy-2,3,4,5-tetrahydrodipicolinate + NADPH + H(+). The protein operates within amino-acid biosynthesis; L-lysine biosynthesis via DAP pathway; (S)-tetrahydrodipicolinate from L-aspartate: step 4/4. Its function is as follows. Catalyzes the conversion of 4-hydroxy-tetrahydrodipicolinate (HTPA) to tetrahydrodipicolinate. The sequence is that of 4-hydroxy-tetrahydrodipicolinate reductase from Streptococcus pneumoniae serotype 4 (strain ATCC BAA-334 / TIGR4).